Here is an 855-residue protein sequence, read N- to C-terminus: MFHVEEESSGGDGSEIDEEFGGDDSTTSLSRWVFDEKDDYEVNEDYDDDGYDEHNHPEMDSDEEDDNVEQRLIRTSPAVDSFDVDALEIPGTQKNEIEDTGIGKKLILALQTLGVVFGDIGTSPLYTFTVMFRRSPINDKEDIIGALSLVIYTLILIPLVKYVHFVLWANDDGEGGTFALYSLICRHANVSLIPNQLPSDARISGFGLKVPSPELERSLIIKERLEASMALKKLLLILVLAGTAMVIADAVVTPAMSVMSAIGGLKVGVGVIEQDQVVVISVSFLVILFSVQKYGTSKLGLVLGPALLLWFFCLAGIGIYNLVKYDSSVFKAFNPAYIYFFFKRNSVNAWYALGGCVLCATGSEAMFADLSYFSVHSIQLTFILLVLPCLLLGYLGQAAYLSENFSAAGDAFFSSVPSSLFWPVFLISNVAALIASRAMTTATFTCIKQSIALGCFPRLKIIHTSKKFIGQIYIPVLNWSLLVVCLIVVCSTSNIFAIGNAYGIAELGIMMTTTILVTLIMLLIWQTNIIVVSMFAIVSLIVELVFFSSVCSSVADGSWIILVFATIMFLIMFVWNYGSKLKYETEVQKKLPMDLLRELGSNLGTIRAPGIGLLYNELAKGVPAIFGHFLTTLPAIHSMVIFVCIKYVPVPSVPQTERFLFRRVCPRSYHLFRCVARYGYKDVRKESHQAFEQILIESLEKFIRKEAQERALESDGDHNDTDSEDDTTLSRVLIAPNGSVYSLGVPLLAEHMNSSNKRPMERRKASIDFGAGPSSALDVEQSLEKELSFIHKAKESGVVYLLGHGDIRATKDSWFLKKLVINYLYAFLRKNSRRGITNLSVPHTHLMQVGMTYMV.

Positions 1–67 are disordered; the sequence is MFHVEEESSG…EMDSDEEDDN (67 aa). The Cytoplasmic portion of the chain corresponds to 1–105; sequence MFHVEEESSG…EIEDTGIGKK (105 aa). The segment covering 36–51 has biased composition (acidic residues); that stretch reads EKDDYEVNEDYDDDGY. The helical transmembrane segment at 106–126 threads the bilayer; sequence LILALQTLGVVFGDIGTSPLY. Residues 127-142 are Extracellular-facing; the sequence is TFTVMFRRSPINDKED. Residues 143-163 form a helical membrane-spanning segment; it reads IIGALSLVIYTLILIPLVKYV. The Cytoplasmic portion of the chain corresponds to 164-233; the sequence is HFVLWANDDG…RLEASMALKK (70 aa). A helical membrane pass occupies residues 234 to 254; that stretch reads LLLILVLAGTAMVIADAVVTP. Over 255–268 the chain is Extracellular; the sequence is AMSVMSAIGGLKVG. The chain crosses the membrane as a helical span at residues 269-289; that stretch reads VGVIEQDQVVVISVSFLVILF. The Cytoplasmic portion of the chain corresponds to 290 to 298; it reads SVQKYGTSK. A helical transmembrane segment spans residues 299–319; sequence LGLVLGPALLLWFFCLAGIGI. Residues 320 to 346 lie on the Extracellular side of the membrane; that stretch reads YNLVKYDSSVFKAFNPAYIYFFFKRNS. A helical membrane pass occupies residues 347–367; that stretch reads VNAWYALGGCVLCATGSEAMF. Over 368-379 the chain is Cytoplasmic; sequence ADLSYFSVHSIQ. Residues 380-400 traverse the membrane as a helical segment; that stretch reads LTFILLVLPCLLLGYLGQAAY. Residues 401 to 415 lie on the Extracellular side of the membrane; the sequence is LSENFSAAGDAFFSS. The N-linked (GlcNAc...) asparagine glycan is linked to N404. The chain crosses the membrane as a helical span at residues 416–436; that stretch reads VPSSLFWPVFLISNVAALIAS. Topologically, residues 437-467 are cytoplasmic; the sequence is RAMTTATFTCIKQSIALGCFPRLKIIHTSKK. Residues 468–488 form a helical membrane-spanning segment; that stretch reads FIGQIYIPVLNWSLLVVCLIV. The Extracellular portion of the chain corresponds to 489-503; that stretch reads VCSTSNIFAIGNAYG. A helical membrane pass occupies residues 504–524; the sequence is IAELGIMMTTTILVTLIMLLI. The Cytoplasmic segment spans residues 525 to 528; that stretch reads WQTN. Residues 529–549 form a helical membrane-spanning segment; sequence IIVVSMFAIVSLIVELVFFSS. Residues 550–553 lie on the Extracellular side of the membrane; the sequence is VCSS. Residues 554–574 traverse the membrane as a helical segment; sequence VADGSWIILVFATIMFLIMFV. Residues 575–855 are Cytoplasmic-facing; that stretch reads WNYGSKLKYE…LMQVGMTYMV (281 aa). Position 766 is a phosphoserine (S766).

This sequence belongs to the HAK/KUP transporter (TC 2.A.72.3) family.

Its subcellular location is the cell membrane. In terms of biological role, probable potassium transporter. This Arabidopsis thaliana (Mouse-ear cress) protein is Potassium transporter 13 (POT13).